Consider the following 420-residue polypeptide: MQIPGHIDPVTTGTVPLRGGNRIDLVGLSRDAIGGVLVEAGLDAKAAKLRAKQIWHWIYHRGVTDFMGMTDIAKAMRPWLTDRFIIGRPTVREAQVSSDGTRKWLLAAADGQEYEMVFIPDADRGTLCVSSQVGCTLNCRFCHTGTMRLVRNLGAGEIVGQVLLARDALGEWPKGNMAGFGAGSDADPEDDDADDDAVGHYTADGRMLTNIVMMGMGEPLYNFDEVKAALKIVMDGDGLALSKRRITLSTSGVVPMMARAGEEIGVNLAVSLHAVSKEIRDEIVPLNRKYGIEELLQACADYPGANNARRITFEYVMLKDKNDRDEDARELVRLIKQYKLPAKVNLIPFNPWPGAPYECSTPERVRAFSNLIFKAGISAPIRTPRGRDIMAACGQLKSAATRPTRAELDRIAEEKQAALG.

Residue E115 is the Proton acceptor of the active site. Positions 121-388 constitute a Radical SAM core domain; the sequence is DADRGTLCVS…APIRTPRGRD (268 aa). A disulfide bridge links C128 with C393. Residues C135, C139, and C142 each contribute to the [4Fe-4S] cluster site. S-adenosyl-L-methionine is bound by residues 217-218, S249, 271-273, and N350; these read GE and SLH. C393 serves as the catalytic S-methylcysteine intermediate.

It belongs to the radical SAM superfamily. RlmN family. It depends on [4Fe-4S] cluster as a cofactor.

The protein localises to the cytoplasm. The enzyme catalyses adenosine(2503) in 23S rRNA + 2 reduced [2Fe-2S]-[ferredoxin] + 2 S-adenosyl-L-methionine = 2-methyladenosine(2503) in 23S rRNA + 5'-deoxyadenosine + L-methionine + 2 oxidized [2Fe-2S]-[ferredoxin] + S-adenosyl-L-homocysteine. It catalyses the reaction adenosine(37) in tRNA + 2 reduced [2Fe-2S]-[ferredoxin] + 2 S-adenosyl-L-methionine = 2-methyladenosine(37) in tRNA + 5'-deoxyadenosine + L-methionine + 2 oxidized [2Fe-2S]-[ferredoxin] + S-adenosyl-L-homocysteine. In terms of biological role, specifically methylates position 2 of adenine 2503 in 23S rRNA and position 2 of adenine 37 in tRNAs. m2A2503 modification seems to play a crucial role in the proofreading step occurring at the peptidyl transferase center and thus would serve to optimize ribosomal fidelity. This Sphingopyxis alaskensis (strain DSM 13593 / LMG 18877 / RB2256) (Sphingomonas alaskensis) protein is Dual-specificity RNA methyltransferase RlmN.